A 151-amino-acid chain; its full sequence is MKIVIQRVKSASVSIDGKIKEKINQGFLLFVGVEDADSNFDLDYAVRKIAQMRIFSDEADKMNLSVQDIQGEILSISQFTLYAETKKGNRPSFSAAGKPYFAKAMYEKFNDSLAQIVPVKAGVFGADMQVELINDGPVTIILDTKEARKNA.

A Gly-cisPro motif, important for rejection of L-amino acids motif is present at residues 136-137 (GP).

It belongs to the DTD family. Homodimer.

It is found in the cytoplasm. The enzyme catalyses glycyl-tRNA(Ala) + H2O = tRNA(Ala) + glycine + H(+). It catalyses the reaction a D-aminoacyl-tRNA + H2O = a tRNA + a D-alpha-amino acid + H(+). Functionally, an aminoacyl-tRNA editing enzyme that deacylates mischarged D-aminoacyl-tRNAs. Also deacylates mischarged glycyl-tRNA(Ala), protecting cells against glycine mischarging by AlaRS. Acts via tRNA-based rather than protein-based catalysis; rejects L-amino acids rather than detecting D-amino acids in the active site. By recycling D-aminoacyl-tRNA to D-amino acids and free tRNA molecules, this enzyme counteracts the toxicity associated with the formation of D-aminoacyl-tRNA entities in vivo and helps enforce protein L-homochirality. In Lactococcus lactis subsp. cremoris (strain SK11), this protein is D-aminoacyl-tRNA deacylase.